Reading from the N-terminus, the 171-residue chain is Zinc uptake regulation protein (171 aa).

Belongs to the Fur family.

Functionally, acts as a negative controlling element, employing Zn(2+) as a cofactor to bind the operator of the repressed genes (znuACB). In Escherichia coli (strain K12), this protein is Zinc uptake regulation protein (zur).